The sequence spans 136 residues: Histone H2A (136 aa).

The segment covering 1 to 11 has biased composition (gly residues); it reads MSSGGKSGGKA. The interval 1-24 is disordered; the sequence is MSSGGKSGGKAGDASSKAQSRSAK. An N6-acetyllysine mark is found at Lys-6 and Lys-10. Over residues 12 to 24 the composition is skewed to low complexity; that stretch reads GDASSKAQSRSAK. Gln-108 carries the post-translational modification N5-methylglutamine. The residue at position 133 (Ser-133) is a Phosphoserine. The short motif at 133–134 is the [ST]-Q motif element; sequence SQ.

This sequence belongs to the histone H2A family. As to quaternary structure, the nucleosome is a histone octamer containing two molecules each of H2A, H2B, H3 and H4 assembled in one H3-H4 heterotetramer and two H2A-H2B heterodimers. The octamer wraps approximately 147 bp of DNA. Phosphorylated to form H2AS128ph (gamma-H2A) in response to DNA double-strand breaks (DSBs) generated by exogenous genotoxic agents and by stalled replication forks. Phosphorylation is dependent on the DNA damage checkpoint kinases MEC1/ATR and TEL1/ATM, spreads on either side of a detected DSB site and may mark the surrounding chromatin for recruitment of proteins required for DNA damage signaling and repair. Gamma-H2A is removed from the DNA prior to the strand invasion-primer extension step of the repair process and subsequently dephosphorylated. Dephosphorylation is necessary for efficient recovery from the DNA damage checkpoint. Post-translationally, acetylated by ESA1 to form H2AK4ac and H2AK7ac.

The protein localises to the nucleus. It is found in the chromosome. Core component of nucleosome which plays a central role in DNA double strand break (DSB) repair. Nucleosomes wrap and compact DNA into chromatin, limiting DNA accessibility to the cellular machineries which require DNA as a template. Histones thereby play a central role in transcription regulation, DNA repair, DNA replication and chromosomal stability. DNA accessibility is regulated via a complex set of post-translational modifications of histones, also called histone code, and nucleosome remodeling. The chain is Histone H2A (HTA1) from Mycosarcoma maydis (Corn smut fungus).